Here is a 546-residue protein sequence, read N- to C-terminus: Chaperonin GroEL (546 aa).

ATP contacts are provided by residues 30–33, Lys-51, 87–91, Gly-415, 479–481, and Asp-495; these read TLGP, DGTTT, and NAA.

This sequence belongs to the chaperonin (HSP60) family. Forms a cylinder of 14 subunits composed of two heptameric rings stacked back-to-back. Interacts with the co-chaperonin GroES.

It is found in the cytoplasm. The enzyme catalyses ATP + H2O + a folded polypeptide = ADP + phosphate + an unfolded polypeptide.. Together with its co-chaperonin GroES, plays an essential role in assisting protein folding. The GroEL-GroES system forms a nano-cage that allows encapsulation of the non-native substrate proteins and provides a physical environment optimized to promote and accelerate protein folding. The polypeptide is Chaperonin GroEL (Azotobacter vinelandii).